The primary structure comprises 838 residues: MEDDDQQKAADLVQELVLRLVSQNPQTPNLDPNSPAFLKTLRYAFRILSSRLTPSVLPDATAIAESLKRRLATQGKSSDALAFADLYTKFASKTGPGSVNNKWALVYLLKIVSDDRKSAINGLDSSVLLPNLGIGDTGNGVLSRGEAKKKDWSNGVLLVSKDPENLRDIAFREYAILVKEENEVTEEVLVRDVLYASQGIDGKYVKFNSEIDGYAVQESVKVPRATRIMVRMLSELGWLFRKVKTFITESMDRFPAEDVGTVGQAFCAALQDELSDYYKLLAVLEAQAMNPIPLVSESASSNNYLSLRRLSVWFAEPMVKMRLMAVLVDKCKVLRGGAMAGAIHLHAQHGDPLVHDFMMSLLRCVCSPLFEMVRSWVLEGELEDTFGEFFVVGQPVKVDLLWREGYKLHPAMLPSFISPSLAQRILRTGKSINFLRVCCDDHGWADAASEAAAASGTTTRRGGLGYGETDALEHLVTEAAKRIDKHLLDVLYKRYKFKEHCLAIKRYLLLGQGDFVQYLMDIVGPKLSEPANNISSFELAGFLEAAIRASNAQYDDRDMLDRLRVKMMPHGSGDRGWDVFSLEYEARVPLDTVFTESVLSKYLRVFNFLWKLKRVEHALIGIWKTMKPNCITSNSFVKLQSSVKLQLLSALRRCQVLWNEMNHFVTNFQYYIMFEVLEVSWSNFSKEMEAAKDLDDLLAAHEKYLNAIVGKSLLGEQSQTIRESLFVLFELILRFRSHADRLYEGIHELQIRSKESGREKNKSQEPGSWISEGRKGLTQRAGEFLQSMSQDMDSIAKEYTSSLDGFLSLLPLQQSVDLKFLFFRLDFTEFYSRLHSKG.

A mediates interactions with GIP1 and GIP2 region spans residues Met1 to Gly199. Residues Ile200 to Ala256 are triggers nucleus envelope localization.

Belongs to the TUBGCP family. As to quaternary structure, part of the gamma-tubulin complex. Gamma-tubulin complex is composed of gamma-tubulin and GCP proteins. Interacts directly with GCP2, GIP1 and GIP2.

It is found in the cytoplasm. The protein localises to the cytoskeleton. Its subcellular location is the microtubule organizing center. The protein resides in the nucleus envelope. It localises to the cell cortex. It is found in the spindle. Gamma-tubulin complex is necessary for microtubule nucleation at the microtubule organizing centers (MTOCs). Required for the positioning of the gamma-tubulin-containing complex on pre-existing microtubules and for the proper organization of cortical arrays. Functionally, gamma-tubulin complex is essential for the control of microtubular network remodeling in the course of initiation and development of giant-feeding cells, and for the successful reproduction of nematodes (e.g. Meloidogyne spp.) in their plant hosts. The chain is Gamma-tubulin complex component 3 (GCP3) from Arabidopsis thaliana (Mouse-ear cress).